We begin with the raw amino-acid sequence, 211 residues long: Protein-methionine-sulfoxide reductase heme-binding subunit MsrQ (211 aa).

A run of 5 helical transmembrane segments spans residues 10-30 (WLKV…AWAI), 82-102 (LWCF…ELGV), 116-136 (PYLT…FTST), 153-173 (FVYL…KIIS), and 178-198 (IYAG…LSLF).

Belongs to the MsrQ family. Heterodimer of a catalytic subunit (MsrP) and a heme-binding subunit (MsrQ). The cofactor is FMN. It depends on heme b as a cofactor.

Its subcellular location is the cell inner membrane. Its function is as follows. Part of the MsrPQ system that repairs oxidized periplasmic proteins containing methionine sulfoxide residues (Met-O), using respiratory chain electrons. Thus protects these proteins from oxidative-stress damage caused by reactive species of oxygen and chlorine generated by the host defense mechanisms. MsrPQ is essential for the maintenance of envelope integrity under bleach stress, rescuing a wide series of structurally unrelated periplasmic proteins from methionine oxidation, including the primary periplasmic chaperone SurA and the lipoprotein Pal. MsrQ provides electrons for reduction to the reductase catalytic subunit MsrP, using the quinone pool of the respiratory chain. The polypeptide is Protein-methionine-sulfoxide reductase heme-binding subunit MsrQ (Escherichia coli (strain UTI89 / UPEC)).